Here is a 782-residue protein sequence, read N- to C-terminus: HHIP-like protein 1 (782 aa).

A signal peptide spans 1–19 (MARARAGALLALWVLGAAA). 4 disulfides stabilise this stretch: cysteine 181/cysteine 521, cysteine 185/cysteine 528, cysteine 399/cysteine 417, and cysteine 484/cysteine 584. A glycan (N-linked (GlcNAc...) asparagine) is linked at asparagine 234. Residues 604–666 (EKFIPKTRST…RRGRLNSASR (63 aa)) are disordered. Positions 610 to 623 (TRSTPRPTARAPTR) are enriched in low complexity. Pro residues predominate over residues 632 to 642 (AAPPAPTPRPA). In terms of domain architecture, SRCR spans 673–776 (VRLVRPAGLS…HDEDAGVVCS (104 aa)). Cystine bridges form between cysteine 700–cysteine 765, cysteine 713–cysteine 775, and cysteine 745–cysteine 755.

The protein belongs to the HHIP family.

It is found in the secreted. This Homo sapiens (Human) protein is HHIP-like protein 1 (HHIPL1).